The sequence spans 506 residues: Transcriptional coactivator YAP1 (506 aa).

Residues 1–38 are compositionally biased toward pro residues; it reads MDPGPPPPAAPPQAQGPPSAPPPPGQAPPSAPGPPAPP. The interval 1-60 is disordered; sequence MDPGPPPPAAPPQAQGPPSAPPPPGQAPPSAPGPPAPPGSQAAPQAPPAGHQIVHVRGDS. Residues 39–50 show a composition bias toward low complexity; that stretch reads GSQAAPQAPPAG. Serine 60 is subject to Phosphoserine. Phosphothreonine is present on threonine 62. The tract at residues 90-112 is disordered; that stretch reads LPDSFFKPPEPKAHSRQASTDAG. Phosphoserine occurs at positions 104 and 108. Phosphothreonine is present on residues threonine 109 and threonine 118. Serine 126, serine 127, serine 130, and serine 137 each carry phosphoserine. Positions 132–160 are disordered; that stretch reads QLGAVSPGTLTPTGVSSGPAAAPSAQHLR. A compositionally biased stretch (low complexity) spans 147–156; it reads SSGPAAAPSA. Residue serine 163 is modified to Phosphoserine. WW domains follow at residues 170–204 and 230–263; these read VPLP…PRKA and PLPD…PRLD. 9 positions are modified to phosphoserine: serine 273, serine 288, serine 369, serine 373, serine 384, serine 390, serine 399, serine 402, and serine 405. 2 disordered regions span residues 274 to 307 and 356 to 416; these read QSAP…MRLQ and TLEQ…RTPD. Pro residues predominate over residues 279-289; the sequence is KQPPPLAPQSP. Residues 290-506 form a transactivation domain region; that stretch reads PGVLGGGGSS…LDKESFLTWL (217 aa). The segment covering 371–393 has biased composition (polar residues); it reads GMSQELRTMTTSGSDPFLNSGTY. Polar residues predominate over residues 401 to 411; that stretch reads DSGLSMSSYSV. Tyrosine 409 is modified (phosphotyrosine). Position 414 is a phosphothreonine (threonine 414).

The protein belongs to the YAP1 family. In terms of assembly, binds to the SH3 domain of the YES kinase. Binds to WBP1 and WBP2. Binds, in vitro, through the WW1 domain, to neural isoforms of ENAH that contain the PPSY motif. The phosphorylated form interacts with YWHAB. Interacts (via WW domains) with LATS1 (via PPxY motif 2). Interacts with LATS2. Interacts with TEAD1, TEAD2 and TEAD3. Interacts wih TEAD4. Interacts with TP73. Interacts with RUNX1. Interacts with HCK. Interacts (via WW domains) with PTPN14 (via PPxY motif 2); this interaction leads to the cytoplasmic sequestration of YAP1 and inhibits its transcriptional coactivator activity. Interacts (when phosphorylated at Ser-112) with SMAD2, SMAD3 and WWTR1. Interacts with PRRG2 (via cytoplasmic domain). Interacts (via WW domains) with PRRG4 (via cytoplasmic domain). Interacts (phosphorylated) with CLDN18; the interaction sequesters YAP1 away from the nucleus and thereby restricts transcription of YAP1 target genes. Interacts with SMAD1. Interacts with AMOT; the interaction facilitates translocation of YAP1 to the cytoplasm and tight junctions. Interacts with AMOTL2, the interaction is required for ubiquitination of AMOTL2 and localization of YAP1 to tight junctions. Post-translationally, phosphorylated by LATS1 and LATS2; leading to cytoplasmic translocation and inactivation. Phosphorylated by ABL1; leading to YAP1 stabilization, enhanced interaction with TP73 and recruitment onto proapoptotic genes; in response to DNA damage. Phosphorylation at Ser-402 and Ser-405 by CK1 is triggered by previous phosphorylation at Ser-399 by LATS proteins and leads to YAP1 ubiquitination by SCF(beta-TRCP) E3 ubiquitin ligase and subsequent degradation. Phosphorylated at Thr-118, Ser-137, Ser-369 and Thr-414 by MAPK8/JNK1 and MAPK9/JNK2, which is required for the regulation of apoptosis by YAP1. Phosphorylated in the nucleus by PRP4K; phosphorylation leads to nuclear exclusion. Ubiquitinated by SCF(beta-TRCP) E3 ubiquitin ligase.

It localises to the cytoplasm. The protein localises to the nucleus. Its subcellular location is the cell junction. It is found in the tight junction. In terms of biological role, transcriptional regulator with dual roles as a coactivator and corepressor. Critical downstream regulatory target in the Hippo signaling pathway, crucial for organ size control and tumor suppression by restricting proliferation and promoting apoptosis. The Hippo signaling pathway core involves a kinase cascade featuring STK3/MST2 and STK4/MST1, along with its regulatory partner SAV1, which phosphorylates and activates LATS1/2 in complex with their regulatory protein, MOB1. This activation leads to the phosphorylation and inactivation of the YAP1 oncoprotein and WWTR1/TAZ. Phosphorylation of YAP1 by LATS1/2 prevents its nuclear translocation, thereby regulating the expression of its target genes. The transcriptional regulation of gene expression requires TEAD transcription factors and modulates cell growth, anchorage-independent growth, and induction of epithelial-mesenchymal transition (EMT). Plays a key role in tissue tension and 3D tissue shape by regulating the cortical actomyosin network, acting via ARHGAP18, a Rho GTPase activating protein that suppresses F-actin polymerization. It also suppresses ciliogenesis by acting as a transcriptional corepressor of TEAD4 target genes AURKA and PLK1. In conjunction with WWTR1, regulates TGFB1-dependent SMAD2 and SMAD3 nuclear accumulation. Synergizes with WBP2 to enhance PGR activity. This chain is Transcriptional coactivator YAP1 (YAP1), found in Canis lupus familiaris (Dog).